Reading from the N-terminus, the 106-residue chain is Large ribosomal subunit protein uL24 (106 aa).

It belongs to the universal ribosomal protein uL24 family. As to quaternary structure, part of the 50S ribosomal subunit.

Functionally, one of two assembly initiator proteins, it binds directly to the 5'-end of the 23S rRNA, where it nucleates assembly of the 50S subunit. One of the proteins that surrounds the polypeptide exit tunnel on the outside of the subunit. The polypeptide is Large ribosomal subunit protein uL24 (Paracidovorax citrulli (strain AAC00-1) (Acidovorax citrulli)).